A 309-amino-acid polypeptide reads, in one-letter code: Olfactory receptor 2G3 (309 aa).

Topologically, residues 1-25 are extracellular; sequence MGLGNESSLMDFILLGFSDHPRLEA. A glycan (N-linked (GlcNAc...) asparagine) is linked at N5. The chain crosses the membrane as a helical span at residues 26–49; sequence VLFVFVLFFYLLTLVGNFTIIIIS. Over 50–57 the chain is Cytoplasmic; sequence YLDPPLHT. A helical transmembrane segment spans residues 58–79; that stretch reads PMYFFLSNLSLLDICFTTSLAP. Topologically, residues 80–100 are extracellular; it reads QTLVNLQRPKKTITYGGCVAQ. C97 and C189 are disulfide-bonded. A helical transmembrane segment spans residues 101-120; the sequence is LYISLALGSTECILLADMAL. Residues 121-139 are Cytoplasmic-facing; that stretch reads DRYIAVCKPLHYVVIMNPR. Residues 140-158 traverse the membrane as a helical segment; the sequence is LCQQLASISWLSGLASSLI. Topologically, residues 159-195 are extracellular; the sequence is HATFTLQLPLCGNHRLDHFICEVPALLKLACVDTTVN. The chain crosses the membrane as a helical span at residues 196–219; that stretch reads ELVLFVVSVLFVVIPPALISISYG. The Cytoplasmic portion of the chain corresponds to 220–236; it reads FITQAVLRIKSVEARHK. The helical transmembrane segment at 237–259 threads the bilayer; it reads AFSTCSSHLTVVIIFYGTIIYVY. The Extracellular portion of the chain corresponds to 260 to 272; the sequence is LQPSDSYAQDQGK. Residues 273 to 292 form a helical membrane-spanning segment; it reads FISLFYTMVTPTLNPIIYTL. At 293–309 the chain is on the cytoplasmic side; the sequence is RNKDMKEALRKLLSGKL.

It belongs to the G-protein coupled receptor 1 family.

The protein resides in the cell membrane. Its function is as follows. Odorant receptor. The protein is Olfactory receptor 2G3 (OR2G3) of Homo sapiens (Human).